A 102-amino-acid polypeptide reads, in one-letter code: Large ribosomal subunit protein bL21 (102 aa).

The protein belongs to the bacterial ribosomal protein bL21 family. Part of the 50S ribosomal subunit. Contacts protein L20.

Its function is as follows. This protein binds to 23S rRNA in the presence of protein L20. This Macrococcus caseolyticus (strain JCSC5402) (Macrococcoides caseolyticum) protein is Large ribosomal subunit protein bL21.